The following is an 881-amino-acid chain: Alanine--tRNA ligase (881 aa).

Positions 568, 572, 670, and 674 each coordinate Zn(2+).

The protein belongs to the class-II aminoacyl-tRNA synthetase family. It depends on Zn(2+) as a cofactor.

It localises to the cytoplasm. It carries out the reaction tRNA(Ala) + L-alanine + ATP = L-alanyl-tRNA(Ala) + AMP + diphosphate. Its function is as follows. Catalyzes the attachment of alanine to tRNA(Ala) in a two-step reaction: alanine is first activated by ATP to form Ala-AMP and then transferred to the acceptor end of tRNA(Ala). Also edits incorrectly charged Ser-tRNA(Ala) and Gly-tRNA(Ala) via its editing domain. This chain is Alanine--tRNA ligase, found in Clostridium acetobutylicum (strain ATCC 824 / DSM 792 / JCM 1419 / IAM 19013 / LMG 5710 / NBRC 13948 / NRRL B-527 / VKM B-1787 / 2291 / W).